The following is a 448-amino-acid chain: Chaperone SurA (448 aa).

An N-terminal signal peptide occupies residues 1–27 (MKKTLRFAAVASGLVASLITVAPSASA). 2 PpiC domains span residues 185–288 (QQDL…RLVE) and 301–399 (IVQT…QVLG).

The protein resides in the periplasm. It catalyses the reaction [protein]-peptidylproline (omega=180) = [protein]-peptidylproline (omega=0). Its function is as follows. Chaperone involved in the correct folding and assembly of outer membrane proteins. Recognizes specific patterns of aromatic residues and the orientation of their side chains, which are found more frequently in integral outer membrane proteins. May act in both early periplasmic and late outer membrane-associated steps of protein maturation. This Burkholderia pseudomallei (strain 1710b) protein is Chaperone SurA.